The sequence spans 104 residues: Large ribosomal subunit protein uL24 (104 aa).

The protein belongs to the universal ribosomal protein uL24 family. Part of the 50S ribosomal subunit.

Functionally, one of two assembly initiator proteins, it binds directly to the 5'-end of the 23S rRNA, where it nucleates assembly of the 50S subunit. In terms of biological role, one of the proteins that surrounds the polypeptide exit tunnel on the outside of the subunit. In Treponema denticola (strain ATCC 35405 / DSM 14222 / CIP 103919 / JCM 8153 / KCTC 15104), this protein is Large ribosomal subunit protein uL24.